Consider the following 302-residue polypeptide: Cyclin-dependent kinase 1-B (302 aa).

Positions 4-287 (YTKIEKIGEG…ARKAMLHPYF (284 aa)) constitute a Protein kinase domain. ATP-binding positions include 10–18 (IGEGTYGVV) and Lys33. Phosphothreonine is present on Thr14. Tyr15 carries the phosphotyrosine; by wee1 and wee2 modification. Asp128 acts as the Proton acceptor in catalysis. Phosphothreonine; by cak is present on Thr161. Residue Ser277 is modified to Phosphoserine.

Belongs to the protein kinase superfamily. CMGC Ser/Thr protein kinase family. CDC2/CDKX subfamily. In terms of assembly, forms a stable but non-covalent complex with a regulatory subunit and with a cyclin. Interacts with spdya. In terms of processing, phosphorylation at Tyr-15 by wee1 and wee2 inhibits the protein kinase activity and acts negative regulator of entry into mitosis (G2 to M transition).

It is found in the nucleus. The enzyme catalyses L-seryl-[protein] + ATP = O-phospho-L-seryl-[protein] + ADP + H(+). It carries out the reaction L-threonyl-[protein] + ATP = O-phospho-L-threonyl-[protein] + ADP + H(+). The catalysed reaction is [DNA-directed RNA polymerase] + ATP = phospho-[DNA-directed RNA polymerase] + ADP + H(+). Phosphorylation at Thr-14 or Tyr-15 inactivates the enzyme, while phosphorylation at Thr-161 activates it. Functionally, plays a key role in the control of the eukaryotic cell cycle by modulating the centrosome cycle as well as mitotic onset; promotes G2-M transition via association with multiple interphase cyclins. During G2 and early mitosis, CDC25A/B/C-mediated dephosphorylation activates CDK1/cyclin complexes which phosphorylate several substrates that trigger at least centrosome separation, Golgi dynamics, nuclear envelope breakdown and chromosome condensation. Once chromosomes are condensed and aligned at the metaphase plate, CDK1 activity is switched off by WEE1- and PKMYT1-mediated phosphorylation to allow sister chromatid separation, chromosome decondensation, reformation of the nuclear envelope and cytokinesis. Catalyzes lamin (LMNA, LMNB1 and LMNB2) phosphorylation at the onset of mitosis, promoting nuclear envelope breakdown. The sequence is that of Cyclin-dependent kinase 1-B (cdk1-b) from Xenopus laevis (African clawed frog).